Reading from the N-terminus, the 231-residue chain is Type 3 secretion system stator protein (231 aa).

As to quaternary structure, the core secretion machinery of the T3SS is composed of approximately 20 different proteins, including cytoplasmic components, a base, an export apparatus and a needle. This subunit is part of the cytosolic complex. Interacts directly with Spa47/SctN (T3SS ATPase) and Spa33/SctQ (the major sorting platform component). Homodimer in solution.

Its subcellular location is the cytoplasm. Its function is as follows. Component of the type III secretion system (T3SS), also called injectisome, which is used to inject bacterial effector proteins into eukaryotic host cells. Acts as a regulator of the Spa47/SctN ATPase activity. It down-regulates the ATPase activity of the oligomeric Spa47/SctN, while it up-regulates the activity of the monomeric form. Important for translocation of MxiH/SctF, the major needle component. This chain is Type 3 secretion system stator protein, found in Shigella flexneri.